A 233-amino-acid polypeptide reads, in one-letter code: 3-dehydroquinate dehydratase (233 aa).

Residues 34 to 36 and arginine 64 each bind 3-dehydroquinate; that span reads ELR. Histidine 118 serves as the catalytic Proton donor/acceptor. Residue lysine 145 is the Schiff-base intermediate with substrate of the active site. 3-dehydroquinate is bound by residues arginine 185, serine 205, and glutamine 209.

This sequence belongs to the type-I 3-dehydroquinase family. Homodimer.

The catalysed reaction is 3-dehydroquinate = 3-dehydroshikimate + H2O. The protein operates within metabolic intermediate biosynthesis; chorismate biosynthesis; chorismate from D-erythrose 4-phosphate and phosphoenolpyruvate: step 3/7. Its function is as follows. Involved in the third step of the chorismate pathway, which leads to the biosynthesis of aromatic amino acids. Catalyzes the cis-dehydration of 3-dehydroquinate (DHQ) and introduces the first double bond of the aromatic ring to yield 3-dehydroshikimate. The chain is 3-dehydroquinate dehydratase from Coxiella burnetii (strain CbuK_Q154) (Coxiella burnetii (strain Q154)).